We begin with the raw amino-acid sequence, 252 residues long: Metalloprotease LoiP (252 aa).

A signal peptide spans 1-18 (MKIRALLVAMSVATVLTG). Cysteine 19 is lipidated: N-palmitoyl cysteine. Residue cysteine 19 is the site of S-diacylglycerol cysteine attachment. A disulfide bridge connects residues cysteine 53 and cysteine 108. Zn(2+) is bound at residue histidine 130. Glutamate 131 is an active-site residue. Residues histidine 134 and glutamate 189 each contribute to the Zn(2+) site. The tract at residues 224 to 252 (RQSSMFDDHPASAERAQHIRDRMSADGIK) is disordered.

It belongs to the peptidase M48B family. Interacts with Era and BepA. It depends on Zn(2+) as a cofactor. In terms of processing, the intramolecular disulfide bond improves the stability and the activity of LoiP. It forms even in the absence of the oxido-reductase DsbA.

Its subcellular location is the cell outer membrane. In terms of biological role, metalloprotease that cleaves substrates preferentially between Phe-Phe residues. Plays a role in response to some stress conditions. Seems to regulate the expression of speB. This chain is Metalloprotease LoiP (loiP), found in Escherichia coli (strain K12).